The primary structure comprises 222 residues: Chymotrypsin-1 (222 aa).

The 221-residue stretch at 1-221 (IVGGKDAPVG…FVSWINANLK (221 aa)) folds into the Peptidase S1 domain. An intrachain disulfide couples Cys-26 to Cys-42. Residues His-41 and Asp-87 each act as charge relay system in the active site. 2 disulfide bridges follow: Cys-151–Cys-164 and Cys-174–Cys-198. Ser-178 functions as the Charge relay system in the catalytic mechanism.

The protein belongs to the peptidase S1 family.

The protein localises to the secreted. Its subcellular location is the extracellular space. The catalysed reaction is Preferential cleavage: Tyr-|-Xaa, Trp-|-Xaa, Phe-|-Xaa, Leu-|-Xaa.. The protein is Chymotrypsin-1 of Solenopsis invicta (Red imported fire ant).